We begin with the raw amino-acid sequence, 339 residues long: Dicamba O-demethylase, oxygenase component (339 aa).

Positions 8 to 110 (WYVAALPEEL…VVERDALIWI (103 aa)) constitute a Rieske domain. 4 residues coordinate [2Fe-2S] cluster: cysteine 48, histidine 50, cysteine 67, and histidine 70. Fe cation-binding residues include histidine 159 and histidine 164. Asparagine 229, histidine 250, and tryptophan 284 together coordinate 3,6-dichloro-2-methoxybenzoate. Aspartate 293 lines the Fe cation pocket.

As to quaternary structure, homotrimer. The dicamba O-demethylase multicomponent enzyme system is composed of an oxygenase component (DdmC) and an electron transfer component formed by a ferredoxin reductase (DdmA) and a ferredoxin (DdmB). In vitro, dicamba O-demethylase assays in which DdmA2 is substituted for DdmA1 demonstrate that the two enzymes possess nearly identical activities. [2Fe-2S] cluster serves as cofactor.

It catalyses the reaction 3,6-dichloro-2-methoxybenzoate + 2 reduced [2Fe-2S]-[ferredoxin] + O2 + 2 H(+) = 3,6-dichlorosalicylate + formaldehyde + 2 oxidized [2Fe-2S]-[ferredoxin] + H2O. Its activity is regulated as follows. Activity enhanced by Fe(2+) and Mg(2+) ions. Functionally, component of the dicamba O-demethylase multicomponent enzyme system involved in the degradation of the herbicide dicamba. In vitro, catalyzes the O-demethylation of 2-methoxy-3,6-dichlorobenzoic acid (dicamba) to yield 3,6-dichlorosalicylic acid (DCSA) via an exocyclic monooxygenation. The chain is Dicamba O-demethylase, oxygenase component from Stenotrophomonas maltophilia (Pseudomonas maltophilia).